A 172-amino-acid chain; its full sequence is uncharacterized protein (172 aa).

The chain crosses the membrane as a helical span at residues 109–129; sequence MLLLYLYYNLLLLTASTPLTF.

The protein resides in the membrane. This is an uncharacterized protein from Saccharomyces cerevisiae (strain ATCC 204508 / S288c) (Baker's yeast).